The primary structure comprises 112 residues: Peptidyl-prolyl cis-trans isomerase FKBP12 (112 aa).

Residues 1 to 26 (MGVEKQVIRPGNGPKPAPGQTVTVHC) form a disordered region. The PPIase FKBP-type domain occupies 19–112 (GQTVTVHCTG…DFEIEVLSVQ (94 aa)). A disulfide bridge links Cys-26 with Cys-80.

It belongs to the FKBP-type PPIase family. Interacts with FIP37 and with the immunosuppressive drug FK506. Its interaction with FIP37 is inhibited by FK506. Interacts with TOR in a rapamycin-dependent manner.

The protein localises to the cytoplasm. It carries out the reaction [protein]-peptidylproline (omega=180) = [protein]-peptidylproline (omega=0). PPIases accelerate the folding of proteins. It catalyzes the cis-trans isomerization of proline imidic peptide bonds in oligopeptides. Mediates rapamycin inactivation of TOR protein kinase activity. The sequence is that of Peptidyl-prolyl cis-trans isomerase FKBP12 (FKBP12) from Arabidopsis thaliana (Mouse-ear cress).